The following is a 1326-amino-acid chain: MERGCPAASSESVTSAGERTQSAVTSSTSTWVKSQASTSRKTEASEESGLGAVDAEVGAGREAFVSMSTLREDVEDVCVSSNSQHGFAVVLDDESSTFEISSSNSLPTSAGAASTVGVVAVDDSSSTDTLNGGHPDLGHPASSEHSRQGFFNEDNEDPPVVCLINDDDDDEEPEPEEDDEEELIEDEDEDAVDIVTGAISCPNTSQLALADGTIMAADGSKIFLETPVVEEAQPHPGQVVTTGSQSELTGKPKRLSDEFLLGEEDQAENLALGRCIKSEPVNPVDDNPSEGDDGATCFSLHDRLMSVRLKQMSLTANTVSNPSPAASANAAAPEEASTSNSSSTSSSALSRADIESMDLIERRDFETEQRLTGGIILRTSSMVSQNKLNLSLIKSMAGGSKAANGSGTANSDDWPSSSNGRTVSSDSKYTYKDLSTTPTSSRKYTNSRLSKSTAKLNLGSSLGASSCSQHRSGSSSTSKSMESSTSCTGAARTDVYTNTNSNDYPSLAPTTSGSSTSGGSCQQDQEENVSASVSYSSVGSQTSQESGCSRTTAINPTAACSTGSACLGDSQASTSASTSSGAGASNRCQYATTSTTKAARQVNASAQTQERFLTRSNPPAASGAGSVGANPTASVRQRRNGSSDVVHLEVVVEEGAGGGDGGVVEPGDFSAEEPWANCDEENNCSDLEEICTCQNGNGSSYGGSNASLSETFDMDAMDPDEPISLSLSSASAGFTEYSLTNPSSLMSHQRKRKFNEGRLLDGGDYSVTISSSGEVGGPGSGVSDNCRKRIAYDFASTPRSSQHLGPTAVLSVTPSSHLTSSTPGSALGRRTPRSVPSRDNPPPELQHWLAQFQRWSHVERLLALDRLIDHCDPSQVRHMMKVIEPQFQRDFISLLPRELALFVLSYLEPKDLLRAAQTCRSWRFLCDDNLLWKEKCRKAQILAEPRSDRPKRGRDGNMPPIASPWKAAYMRQHIIEMNWRSRPVRKPKVLKGHDDHVITCLQFSGNRIVSGSDDNTLKVWSAVNGKCLRTLVGHTGGVWSSQMSGNIIISGSTDRTLKVWDMDSGACVHTLQGHTSTVRCMHLHGSKVVSGSRDATLRVWDIEQGSCLHVLVGHLAAVRCVQYDGKLIVSGAYDYMVKIWHPERQECLHTLQGHTNRVYSLQFDGLHVVSGSLDTSIRVWDVETGNCKHTLMGHQSLTSGMELRQNILVSGNADSTVKVWDITTGQCLQTLSGPNKHHSAVTCLQFNSRFVVTSSDDGTVKLWDVKTGDFIRNLVALDSGGSGGVVWRIRANDTKLICAVGSRNGTEETKLMVLDFDVEGACVKCS.

6 disordered regions span residues 1–58, 123–187, 318–351, 399–549, 615–642, and 797–843; these read MERG…AEVG, DSSS…IEDE, TVSNPSPAASANAAAPEEASTSNSSSTSSSALSR, GSKA…SGCS, RSNPPAASGAGSVGANPTASVRQRRNGS, and TPRS…NPPP. Polar residues predominate over residues 9–39; it reads SSESVTSAGERTQSAVTSSTSTWVKSQASTS. Residues 165-187 show a composition bias toward acidic residues; that stretch reads NDDDDDEEPEPEEDDEEELIEDE. Positions 320–348 are enriched in low complexity; it reads SNPSPAASANAAAPEEASTSNSSSTSSSA. Positions 403–464 are enriched in polar residues; it reads ANGSGTANSD…KLNLGSSLGA (62 aa). Positions 465 to 486 are enriched in low complexity; the sequence is SSCSQHRSGSSSTSKSMESSTS. Over residues 495 to 504 the composition is skewed to polar residues; that stretch reads VYTNTNSNDY. 3 stretches are compositionally biased toward low complexity: residues 510-520, 528-546, and 616-631; these read TTSGSSTSGGS, NVSASVSYSSVGSQTSQES, and SNPPAASGAGSVGANP. Composition is skewed to polar residues over residues 632 to 642 and 797 to 824; these read TASVRQRRNGS and TPRSSQHLGPTAVLSVTPSSHLTSSTPG. At T813 the chain carries Phosphothreonine. S825 carries the phosphoserine modification. An F-box domain is found at 889–935; the sequence is RDFISLLPRELALFVLSYLEPKDLLRAAQTCRSWRFLCDDNLLWKEK. WD repeat units lie at residues 992-1030, 1033-1070, 1073-1110, 1113-1150, 1153-1190, 1193-1232, and 1236-1273; these read GHDDHVITCLQFSGNRIVSGSDDNTLKVWSAVNGKCLRT, GHTGGVWSSQMSGNIIISGSTDRTLKVWDMDSGACVHT, GHTSTVRCMHLHGSKVVSGSRDATLRVWDIEQGSCLHV, GHLAAVRCVQYDGKLIVSGAYDYMVKIWHPERQECLHT, GHTNRVYSLQFDGLHVVSGSLDTSIRVWDVETGNCKHT, GHQSLTSGMELRQNILVSGNADSTVKVWDITTGQCLQTLS, and KHHSAVTCLQFNSRFVVTSSDDGTVKLWDVKTGDFIRN.

In terms of assembly, part of a SCF E3 ubiquitin-protein ligase complex. Interacts with Myc and puf. Interacts with CycE. As to expression, expressed in follicle cell epithelium and imaginal disks, particularly in the morphogenetic furrow.

It is found in the nucleus. Its pathway is protein modification; protein ubiquitination. Its function is as follows. Substrate recognition component of a SCF (SKP1-CUL1-F-box protein) E3 ubiquitin-protein ligase complex which mediates the ubiquitination and subsequent proteasomal degradation of target proteins. Probably recognizes and binds to phosphorylated target proteins. In the wing and eye, negatively regulates cell growth and proliferation by mediating the degradation of Myc and cyclin E, respectively. Required for endocycles, but not mitosis in follicle cell epithelium. The sequence is that of F-box/WD repeat-containing protein 7 from Drosophila melanogaster (Fruit fly).